The chain runs to 292 residues: MELLCCEGTRHAPRAGPDPRLLGDQRVLQSLLRLEERYVPRASYFQCVQREIKPHMRKMLAYWMLEVCEEQRCEEEVFPLAMNYLDRYLSCVPTRKAQLQLLGAVCMLLASKLRETTPLTIEKLCIYTDHAVSPRQLRDWEVLVLGKLKWDLAAVIAHDFLAFILHRLSLPRDRQALVKKHAQTFLALCATDYTFAMYPPSMIATGSIGAAVQGLGACSMSGDELTELLAGITGTEVDCLRACQEQIEAALRESLREASQTSSSPAPKAPRGSSSQGPSQTSTPTDVTAIHL.

The Cyclin N-terminal domain maps to 27-152 (VLQSLLRLEE…LVLGKLKWDL (126 aa)). The tract at residues 254-292 (SLREASQTSSSPAPKAPRGSSSQGPSQTSTPTDVTAIHL) is disordered. A phosphoserine mark is found at Ser264 and Ser279. Residues 272–285 (GSSSQGPSQTSTPT) are compositionally biased toward low complexity. Thr283 carries the post-translational modification Phosphothreonine.

This sequence belongs to the cyclin family. Cyclin D subfamily. As to quaternary structure, interacts with the CDK4 and CDK6 protein kinases to form a serine/threonine kinase holoenzyme complex. The cyclin subunit imparts substrate specificity to the complex. Interacts with ATF5. Interacts with EIF3K. Component of the ternary complex cyclin D/CDK4/CDKN1B required for nuclear translocation and modulation of CDK4-mediated kinase activity. Can form similar complexes with either CDKN1A or CDKN2A. Post-translationally, phosphorylation at Thr-283 by MAP kinases is required for ubiquitination and degradation by the DCX(AMBRA1) complex. Ubiquitinated by the DCX(AMBRA1) complex during the transition from G1 to S cell phase, leading to its degradation: ubiquitination is dependent on Thr-283 phosphorylation. The DCX(AMBRA1) complex represents the major regulator of CCND3 stability during the G1/S transition. Polyubiquitinated by the SCF(FBXL2) complex, leading to proteasomal degradation.

It is found in the nucleus. Its subcellular location is the cytoplasm. Regulatory component of the cyclin D3-CDK4 (DC) complex that phosphorylates and inhibits members of the retinoblastoma (RB) protein family including RB1 and regulates the cell-cycle during G(1)/S transition. Phosphorylation of RB1 allows dissociation of the transcription factor E2F from the RB/E2F complex and the subsequent transcription of E2F target genes which are responsible for the progression through the G(1) phase. Hypophosphorylates RB1 in early G(1) phase. Cyclin D-CDK4 complexes are major integrators of various mitogenenic and antimitogenic signals. Component of the ternary complex, cyclin D3/CDK4/CDKN1B, required for nuclear translocation and activity of the cyclin D-CDK4 complex. Shows transcriptional coactivator activity with ATF5 independently of CDK4. The chain is G1/S-specific cyclin-D3 from Homo sapiens (Human).